The sequence spans 286 residues: Cbb3-type cytochrome c oxidase subunit CcoP (286 aa).

2 helical membrane-spanning segments follow: residues 11–31 and 62–82; these read FGLIAALVILVLTIYESSSLI and VGWIASFMCTIVWAFWYFFFG. Cytochrome c domains are found at residues 116-195 and 205-286; these read ELVD…MAEL and QLID…LSNR. Residues Cys-129, Cys-132, His-133, Met-174, Cys-219, Cys-222, His-223, and Met-264 each contribute to the heme c site.

It belongs to the CcoP / FixP family. Component of the cbb3-type cytochrome c oxidase at least composed of CcoN, CcoO, CcoQ and CcoP. Heme c is required as a cofactor.

It localises to the cell inner membrane. Its pathway is energy metabolism; oxidative phosphorylation. In terms of biological role, C-type cytochrome. Part of the cbb3-type cytochrome c oxidase complex. CcoP subunit is required for transferring electrons from donor cytochrome c via its heme groups to CcoO subunit. From there, electrons are shuttled to the catalytic binuclear center of CcoN subunit where oxygen reduction takes place. The complex also functions as a proton pump. The sequence is that of Cbb3-type cytochrome c oxidase subunit CcoP from Helicobacter pylori (strain ATCC 700392 / 26695) (Campylobacter pylori).